We begin with the raw amino-acid sequence, 521 residues long: AAA ATPase forming ring-shaped complexes (521 aa).

Residues 4–44 (TEDLAALNDRLMAKNHALAEALNRAGKELTKAKSRLAQLAQ) adopt a coiled-coil conformation. Residue 235-240 (GNGKTM) participates in ATP binding.

It belongs to the AAA ATPase family. Homohexamer. Assembles into a hexameric ring structure.

The protein is AAA ATPase forming ring-shaped complexes of Bifidobacterium longum subsp. infantis (strain ATCC 15697 / DSM 20088 / JCM 1222 / NCTC 11817 / S12).